The following is a 240-amino-acid chain: 2,3,4,5-tetrahydropyridine-2,6-dicarboxylate N-acetyltransferase (240 aa).

It belongs to the transferase hexapeptide repeat family. DapH subfamily.

The catalysed reaction is (S)-2,3,4,5-tetrahydrodipicolinate + acetyl-CoA + H2O = L-2-acetamido-6-oxoheptanedioate + CoA. It functions in the pathway amino-acid biosynthesis; L-lysine biosynthesis via DAP pathway; LL-2,6-diaminopimelate from (S)-tetrahydrodipicolinate (acetylase route): step 1/3. Functionally, catalyzes the transfer of an acetyl group from acetyl-CoA to tetrahydrodipicolinate. The sequence is that of 2,3,4,5-tetrahydropyridine-2,6-dicarboxylate N-acetyltransferase from Staphylococcus epidermidis (strain ATCC 35984 / DSM 28319 / BCRC 17069 / CCUG 31568 / BM 3577 / RP62A).